The chain runs to 1223 residues: WD repeat-containing protein 11 (1223 aa).

2 WD repeats span residues 59–108 and 111–154; these read KHKA…AQCE and EHVK…KLWK. 2 positions are modified to phosphoserine: S205 and S209. The stretch at 354-393 is one WD 3 repeat; sequence KTVRPFSMVCCPVNENAAALIVSDGRVMIWELKSAVCSRN. Residues S401 and S405 each carry the phosphoserine modification. WD repeat units follow at residues 470-509, 565-604, 707-744, 746-786, 792-830, and 892-939; these read RMCP…LHKE, NDES…LLRE, GSMG…SRGI, THRS…MVSS, NVTF…TCFR, and ALSN…HSLS.

In terms of assembly, component of the complex WDR11 composed of C17orf75, FAM91A1 and WDR11; FAM91A1 and WDR11 are required for proper location of the complex. Interacts with GLI3; the interaction associateS EMX1 with GLI3. Interacts with TBC1D23; this interaction may be indirect and recruits TBC1D23 to AP-1-derived vesicles. Interacts (via the N-terminal and the central portion of the protein) with EMX1. As to expression, broadly expressed in various organs including brain, eye,ear, lung, heart, kideny and gonads. Cerebral cortex. The entire developing central nervous system, except for the spinal cord, reveals expression. Expressed in the neuroepithelium, including the diencephalic region that gives rise to hypothalamic neurons. In the adult brain, intense expression is restricted to the olfactory bulb, the olfaction-related piriform cortex, the granule cell layer of the cerebellum, and neurons of the hippocampal formation. The brain demonstrated expression scattered throughout the hypothalamus, sometimes in clusters of neurons.

The protein localises to the cytoplasm. Its subcellular location is the cytoskeleton. It is found in the cilium basal body. The protein resides in the nucleus. It localises to the cilium axoneme. The protein localises to the cytoplasmic vesicle. Its subcellular location is the golgi apparatus. It is found in the trans-Golgi network. In terms of biological role, involved in the Hedgehog (Hh) signaling pathway, is essential for normal ciliogenesis. Regulates the proteolytic processing of GLI3 and cooperates with the transcription factor EMX1 in the induction of downstream Hh pathway gene expression and gonadotropin-releasing hormone production. WDR11 complex facilitates the tethering of Adaptor protein-1 complex (AP-1)-derived vesicles. WDR11 complex acts together with TBC1D23 to facilitate the golgin-mediated capture of vesicles generated using AP-1. This chain is WD repeat-containing protein 11 (Wdr11), found in Mus musculus (Mouse).